Reading from the N-terminus, the 105-residue chain is Small ribosomal subunit protein eS24 (105 aa).

The protein belongs to the eukaryotic ribosomal protein eS24 family.

The sequence is that of Small ribosomal subunit protein eS24 from Ignicoccus hospitalis (strain KIN4/I / DSM 18386 / JCM 14125).